We begin with the raw amino-acid sequence, 507 residues long: Tyrosine protein-kinase src-2 (507 aa).

Basic and acidic residues predominate over residues 1–10 (MGSCIGKEDP). A disordered region spans residues 1–52 (MGSCIGKEDPPPGATSPVHTSSTLGRESLPSHPRIPSIGPIAASSSGNTIDK). Gly-2 carries the N-myristoyl glycine lipid modification. The span at 35–47 (IPSIGPIAASSSG) shows a compositional bias: low complexity. Positions 57–118 (SQSANFVALF…PSNYVAREKS (62 aa)) constitute an SH3 domain. Residues 124-216 (WYFGKMRRID…GLCVNLGAPC (93 aa)) enclose the SH2 domain. The region spanning 240–494 (VRLIRQIGAG…LQWKLEDLFN (255 aa)) is the Protein kinase domain. Residues 246 to 254 (IGAGQFGEV) and Lys-268 each bind ATP. Catalysis depends on Asp-358, which acts as the Proton acceptor. Tyr-500 carries the phosphotyrosine modification.

Belongs to the protein kinase superfamily. Tyr protein kinase family. SRC subfamily. Mg(2+) is required as a cofactor. Requires Mn(2+) as cofactor. In terms of processing, may be phosphorylated on Tyr-500 by csk-1. Expressed in vulva, cells around anus and pharyngeal muscles.

It carries out the reaction L-tyrosyl-[protein] + ATP = O-phospho-L-tyrosyl-[protein] + ADP + H(+). With respect to regulation, may be inhibited by csk-1-mediated phosphorylation at Tyr-500. Functionally, non-receptor tyrosine-protein kinase which may play a role in larval and pharynx development. Unlike src-1, does not play a role in embryonic development. The sequence is that of Tyrosine protein-kinase src-2 from Caenorhabditis elegans.